The chain runs to 286 residues: ATP synthase gamma chain (286 aa).

Belongs to the ATPase gamma chain family. F-type ATPases have 2 components, CF(1) - the catalytic core - and CF(0) - the membrane proton channel. CF(1) has five subunits: alpha(3), beta(3), gamma(1), delta(1), epsilon(1). CF(0) has three main subunits: a, b and c.

The protein resides in the cell inner membrane. In terms of biological role, produces ATP from ADP in the presence of a proton gradient across the membrane. The gamma chain is believed to be important in regulating ATPase activity and the flow of protons through the CF(0) complex. This Shewanella oneidensis (strain ATCC 700550 / JCM 31522 / CIP 106686 / LMG 19005 / NCIMB 14063 / MR-1) protein is ATP synthase gamma chain.